Consider the following 69-residue polypeptide: Sperm protamine P1 (69 aa).

Positions 1–69 (MARYRHSRSR…YSRRRRRRYY (69 aa)) are disordered.

The protein belongs to the protamine P1 family. As to expression, testis.

Its subcellular location is the nucleus. The protein resides in the chromosome. Protamines substitute for histones in the chromatin of sperm during the haploid phase of spermatogenesis. They compact sperm DNA into a highly condensed, stable and inactive complex. The chain is Sperm protamine P1 (PRM1) from Pseudochirops cupreus (Coppery ringtail).